Consider the following 425-residue polypeptide: Putative dipeptidase MGYG_00085 (425 aa).

The N-terminal stretch at 1–31 is a signal peptide; sequence MAPERRSRLSETAGLFVSLLALTSIVPVQAV. Zn(2+)-binding residues include histidine 56, aspartate 58, and glutamate 168. Cysteines 107 and 197 form a disulfide. Histidine 195 provides a ligand contact to substrate. Zn(2+) contacts are provided by histidine 239 and histidine 260. Substrate-binding residues include arginine 271 and aspartate 331. Asparagine 403 carries N-linked (GlcNAc...) asparagine glycosylation.

Belongs to the metallo-dependent hydrolases superfamily. Peptidase M19 family. It depends on Zn(2+) as a cofactor.

It carries out the reaction an L-aminoacyl-L-amino acid + H2O = 2 an L-alpha-amino acid. Its function is as follows. Hydrolyzes a wide range of dipeptides. The chain is Putative dipeptidase MGYG_00085 from Arthroderma gypseum (strain ATCC MYA-4604 / CBS 118893) (Microsporum gypseum).